We begin with the raw amino-acid sequence, 408 residues long: Na(+)-translocating NADH-quinone reductase subunit F (408 aa).

The chain crosses the membrane as a helical span at residues 4–24 (IYLGVGMFIAIVLALVLIIMF). One can recognise a 2Fe-2S ferredoxin-type domain in the interval 33 to 127 (GEVTISINGD…DMDIELPEEI (95 aa)). The [2Fe-2S] cluster site is built by C70, C76, C79, and C111. Residues 130–270 (IKKWDCEVIS…SGPFGEFFAK (141 aa)) form the FAD-binding FR-type domain.

The protein belongs to the NqrF family. As to quaternary structure, composed of six subunits; NqrA, NqrB, NqrC, NqrD, NqrE and NqrF. [2Fe-2S] cluster is required as a cofactor. The cofactor is FAD.

It localises to the cell inner membrane. It carries out the reaction a ubiquinone + n Na(+)(in) + NADH + H(+) = a ubiquinol + n Na(+)(out) + NAD(+). Functionally, NQR complex catalyzes the reduction of ubiquinone-1 to ubiquinol by two successive reactions, coupled with the transport of Na(+) ions from the cytoplasm to the periplasm. The first step is catalyzed by NqrF, which accepts electrons from NADH and reduces ubiquinone-1 to ubisemiquinone by a one-electron transfer pathway. The polypeptide is Na(+)-translocating NADH-quinone reductase subunit F (Pseudoalteromonas atlantica (strain T6c / ATCC BAA-1087)).